The sequence spans 194 residues: Holliday junction branch migration complex subunit RuvA (194 aa).

A domain I region spans residues 1 to 64 (MIGRLRGVLT…DDSAALYGFL (64 aa)). The tract at residues 65–140 (SESERRLFRH…RAADFNNGIS (76 aa)) is domain II. The segment at 140–144 (STSGK) is flexible linker. The domain III stretch occupies residues 145–194 (LNLDTVSEAALALQQLGYKPAEAARMARDAGTESDDVATVIKKALQAALC).

It belongs to the RuvA family. In terms of assembly, homotetramer. Forms an RuvA(8)-RuvB(12)-Holliday junction (HJ) complex. HJ DNA is sandwiched between 2 RuvA tetramers; dsDNA enters through RuvA and exits via RuvB. An RuvB hexamer assembles on each DNA strand where it exits the tetramer. Each RuvB hexamer is contacted by two RuvA subunits (via domain III) on 2 adjacent RuvB subunits; this complex drives branch migration. In the full resolvosome a probable DNA-RuvA(4)-RuvB(12)-RuvC(2) complex forms which resolves the HJ.

It is found in the cytoplasm. The RuvA-RuvB-RuvC complex processes Holliday junction (HJ) DNA during genetic recombination and DNA repair, while the RuvA-RuvB complex plays an important role in the rescue of blocked DNA replication forks via replication fork reversal (RFR). RuvA specifically binds to HJ cruciform DNA, conferring on it an open structure. The RuvB hexamer acts as an ATP-dependent pump, pulling dsDNA into and through the RuvAB complex. HJ branch migration allows RuvC to scan DNA until it finds its consensus sequence, where it cleaves and resolves the cruciform DNA. This is Holliday junction branch migration complex subunit RuvA from Xylella fastidiosa (strain M12).